The primary structure comprises 104 residues: UPF0145 protein RD1_2695 (104 aa).

This sequence belongs to the UPF0145 family.

The chain is UPF0145 protein RD1_2695 from Roseobacter denitrificans (strain ATCC 33942 / OCh 114) (Erythrobacter sp. (strain OCh 114)).